A 92-amino-acid polypeptide reads, in one-letter code: Small ribosomal subunit protein bS20 (92 aa).

This sequence belongs to the bacterial ribosomal protein bS20 family.

In terms of biological role, binds directly to 16S ribosomal RNA. The sequence is that of Small ribosomal subunit protein bS20 from Rickettsia africae (strain ESF-5).